A 483-amino-acid chain; its full sequence is ATP synthase subunit beta (483 aa).

Position 168-175 (168-175 (GGAGVGKT)) interacts with ATP.

Belongs to the ATPase alpha/beta chains family. F-type ATPases have 2 components, CF(1) - the catalytic core - and CF(0) - the membrane proton channel. CF(1) has five subunits: alpha(3), beta(3), gamma(1), delta(1), epsilon(1). CF(0) has three main subunits: a(1), b(2) and c(9-12). The alpha and beta chains form an alternating ring which encloses part of the gamma chain. CF(1) is attached to CF(0) by a central stalk formed by the gamma and epsilon chains, while a peripheral stalk is formed by the delta and b chains.

Its subcellular location is the cell membrane. It catalyses the reaction ATP + H2O + 4 H(+)(in) = ADP + phosphate + 5 H(+)(out). Its function is as follows. Produces ATP from ADP in the presence of a proton gradient across the membrane. The catalytic sites are hosted primarily by the beta subunits. This is ATP synthase subunit beta from Mycobacterium ulcerans (strain Agy99).